The following is a 550-amino-acid chain: Neuronal acetylcholine receptor subunit alpha-9-II (550 aa).

The signal sequence occupies residues 1–20 (MRKMVPVVCFATMLLQVAHS). The Extracellular segment spans residues 21–233 (AQGRYAQQLL…YTVLLQRRSS (213 aa)). N-linked (GlcNAc...) asparagine glycosylation occurs at Asn52. A disulfide bridge connects residues Cys150 and Cys164. N-linked (GlcNAc...) asparagine glycosylation is present at Asn165. A disulfide bond links Cys214 and Cys215. Helical transmembrane passes span 234–254 (FYIF…PLGF), 264–284 (VSLG…VAES), and 298–318 (YIAT…IMNI). Topologically, residues 319 to 528 (HFCGAEAKPV…WKRVAKVMDR (210 aa)) are cytoplasmic. A disordered region spans residues 357 to 439 (TSSSSSSSSS…HLSSSKYEGF (83 aa)). Low complexity predominate over residues 358-367 (SSSSSSSSSS). Over residues 413 to 422 (RHPKPRHQHH) the composition is skewed to basic residues. The helical transmembrane segment at 529-549 (FFMWIFFIMVFLMSILIIGKA) threads the bilayer.

It belongs to the ligand-gated ion channel (TC 1.A.9) family. Acetylcholine receptor (TC 1.A.9.1) subfamily. Expressed in the brain, liver, olfactory mucosa, pituitary gland and hair cells of the saccule.

The protein resides in the postsynaptic cell membrane. The protein localises to the cell membrane. This Oncorhynchus mykiss (Rainbow trout) protein is Neuronal acetylcholine receptor subunit alpha-9-II.